The sequence spans 292 residues: 4-diphosphocytidyl-2-C-methyl-D-erythritol kinase (292 aa).

Lysine 11 is a catalytic residue. ATP is bound at residue 95–105; that stretch reads PVSAGLAGGSS. Residue aspartate 137 is part of the active site.

It belongs to the GHMP kinase family. IspE subfamily.

The enzyme catalyses 4-CDP-2-C-methyl-D-erythritol + ATP = 4-CDP-2-C-methyl-D-erythritol 2-phosphate + ADP + H(+). The protein operates within isoprenoid biosynthesis; isopentenyl diphosphate biosynthesis via DXP pathway; isopentenyl diphosphate from 1-deoxy-D-xylulose 5-phosphate: step 3/6. Catalyzes the phosphorylation of the position 2 hydroxy group of 4-diphosphocytidyl-2C-methyl-D-erythritol. In Alkaliphilus oremlandii (strain OhILAs) (Clostridium oremlandii (strain OhILAs)), this protein is 4-diphosphocytidyl-2-C-methyl-D-erythritol kinase.